Here is a 485-residue protein sequence, read N- to C-terminus: UDP-glycosyltransferase 91D1 (485 aa).

UDP-alpha-D-glucose contacts are provided by residues Ser296, 355 to 356 (WA), 373 to 381 (HCGSGSIVE), and 395 to 398 (FCDQ).

The protein belongs to the UDP-glycosyltransferase family.

May glycosylate diterpenes or flavonols in leaves. This is UDP-glycosyltransferase 91D1 from Stevia rebaudiana (Stevia).